Here is a 191-residue protein sequence, read N- to C-terminus: Calcium-activated potassium channel subunit beta-1 (191 aa).

The Cytoplasmic portion of the chain corresponds to 1–15 (MGKKLVMAQKRGETR). A helical transmembrane segment spans residues 16–36 (ALCLGVAMVMCAVIAYYILGT). Topologically, residues 37-157 (TMLPLYQKSV…YRRLYGPQTL (121 aa)) are extracellular. 2 N-linked (GlcNAc...) asparagine glycosylation sites follow: asparagine 80 and asparagine 142. The chain crosses the membrane as a helical span at residues 158–178 (LFSLFWPTFLLTGGLLIIAMV). The Cytoplasmic portion of the chain corresponds to 179 to 191 (KINQSLSILAAQR).

This sequence belongs to the KCNMB (TC 8.A.14.1) family. KCNMB1 subfamily. As to quaternary structure, interacts with KCNMA1 tetramer. There are probably 4 molecules of KCMNB1 per KCNMA1 tetramer. Post-translationally, N-glycosylated.

It localises to the membrane. Regulatory subunit of the calcium activated potassium KCNMA1 (maxiK) channel. Modulates the calcium sensitivity and gating kinetics of KCNMA1, thereby contributing to KCNMA1 channel diversity. Increases the apparent Ca(2+)/voltage sensitivity of the KCNMA1 channel. It also modifies KCNMA1 channel kinetics and alters its pharmacological properties. It slows down the activation and the deactivation kinetics of the channel. Acts as a negative regulator of smooth muscle contraction by enhancing the calcium sensitivity to KCNMA1. Its presence is also a requirement for internal binding of the KCNMA1 channel opener dehydrosoyasaponin I (DHS-1) triterpene glycoside and for external binding of the agonist hormone 17-beta-estradiol (E2). Increases the binding activity of charybdotoxin (CTX) toxin to KCNMA1 peptide blocker by increasing the CTX association rate and decreasing the dissociation rate. The sequence is that of Calcium-activated potassium channel subunit beta-1 (KCNMB1) from Canis lupus familiaris (Dog).